A 216-amino-acid polypeptide reads, in one-letter code: Adenylate kinase (216 aa).

13–18 (GAGKGT) serves as a coordination point for ATP. The tract at residues 33-66 (TTGDALRANKTKDITHLDVEYDTPGAYMDAGELV) is NMP. AMP contacts are provided by residues Thr34, Arg39, 64–66 (ELV), 89–92 (GYPR), and Gln96. The tract at residues 125 to 162 (GRRVCEDCGATFHVSFNQPETEGVCDACGGSLYQREDD) is LID. Arg126 serves as a coordination point for ATP. Residues Cys129 and Cys132 each contribute to the Zn(2+) site. 135 to 136 (TF) contributes to the ATP binding site. 2 residues coordinate Zn(2+): Cys149 and Cys152. Arg159 and Arg170 together coordinate AMP. Arg198 contacts ATP.

It belongs to the adenylate kinase family. In terms of assembly, monomer.

It is found in the cytoplasm. The enzyme catalyses AMP + ATP = 2 ADP. It functions in the pathway purine metabolism; AMP biosynthesis via salvage pathway; AMP from ADP: step 1/1. Catalyzes the reversible transfer of the terminal phosphate group between ATP and AMP. Plays an important role in cellular energy homeostasis and in adenine nucleotide metabolism. The sequence is that of Adenylate kinase from Halobacterium salinarum (strain ATCC 700922 / JCM 11081 / NRC-1) (Halobacterium halobium).